A 466-amino-acid chain; its full sequence is Asparagine--tRNA ligase (466 aa).

It belongs to the class-II aminoacyl-tRNA synthetase family. As to quaternary structure, homodimer.

The protein resides in the cytoplasm. The catalysed reaction is tRNA(Asn) + L-asparagine + ATP = L-asparaginyl-tRNA(Asn) + AMP + diphosphate + H(+). The polypeptide is Asparagine--tRNA ligase (Buchnera aphidicola subsp. Schizaphis graminum (strain Sg)).